We begin with the raw amino-acid sequence, 214 residues long: Pyridoxine/pyridoxamine 5'-phosphate oxidase (214 aa).

Substrate contacts are provided by residues 8–11 (RINY) and K66. FMN-binding positions include 61-66 (RIVLIK), 76-77 (FT), R82, K83, and Q105. The substrate site is built by Y123, R127, and S131. FMN is bound by residues 140–141 (QS) and W184. 190 to 192 (RLH) is a binding site for substrate. Position 194 (R194) interacts with FMN.

It belongs to the pyridoxamine 5'-phosphate oxidase family. In terms of assembly, homodimer. The cofactor is FMN.

The catalysed reaction is pyridoxamine 5'-phosphate + O2 + H2O = pyridoxal 5'-phosphate + H2O2 + NH4(+). It catalyses the reaction pyridoxine 5'-phosphate + O2 = pyridoxal 5'-phosphate + H2O2. The protein operates within cofactor metabolism; pyridoxal 5'-phosphate salvage; pyridoxal 5'-phosphate from pyridoxamine 5'-phosphate: step 1/1. It participates in cofactor metabolism; pyridoxal 5'-phosphate salvage; pyridoxal 5'-phosphate from pyridoxine 5'-phosphate: step 1/1. Functionally, catalyzes the oxidation of either pyridoxine 5'-phosphate (PNP) or pyridoxamine 5'-phosphate (PMP) into pyridoxal 5'-phosphate (PLP). The chain is Pyridoxine/pyridoxamine 5'-phosphate oxidase from Burkholderia orbicola (strain MC0-3).